Here is a 271-residue protein sequence, read N- to C-terminus: GPN-loop GTPase 3 (271 aa).

Residue 13–18 coordinates GTP; that stretch reads GAGKST. The Gly-Pro-Asn (GPN)-loop; involved in dimer interface signature appears at 70-72; the sequence is GPN. A GTP-binding site is contributed by 173-176; that stretch reads SKVD.

Belongs to the GPN-loop GTPase family. Heterodimers with GPN1 or GPN2. Binds to RNA polymerase II (RNAPII).

Functionally, small GTPase required for proper nuclear import of RNA polymerase II and III (RNAPII and RNAPIII). May act at an RNAP assembly step prior to nuclear import. This chain is GPN-loop GTPase 3, found in Eremothecium gossypii (strain ATCC 10895 / CBS 109.51 / FGSC 9923 / NRRL Y-1056) (Yeast).